The sequence spans 201 residues: Cytochrome c oxidase subunit 3 (201 aa).

4 consecutive transmembrane segments (helical) span residues 25–45, 65–85, 100–120, and 137–157; these read VLGLLVFLISESLMFGGLFAA, LFVPTINTLILISSSFVIHYG, WYWITAAMGAVFLGGQVYEYL, and VMTGFHGLHVFIGILLILGVI.

It belongs to the cytochrome c oxidase subunit 3 family.

Its subcellular location is the cell membrane. The enzyme catalyses 4 Fe(II)-[cytochrome c] + O2 + 8 H(+)(in) = 4 Fe(III)-[cytochrome c] + 2 H2O + 4 H(+)(out). The polypeptide is Cytochrome c oxidase subunit 3 (ctaE) (Thermostichus vulcanus (Synechococcus vulcanus)).